Consider the following 504-residue polypeptide: NADH-quinone oxidoreductase subunit N (504 aa).

14 helical membrane-spanning segments follow: residues 9 to 29 (IALLPIIVIGITIVGIMLSII), 38 to 58 (AVLTIIGMIIASVSSLLHMMW), 78 to 98 (VLYVILIMFVGIASSILGYVW), 114 to 134 (LLIASIGGILLVITNHLIVLF), 135 to 155 (LGIELISISICGLISYPVFSK), 164 to 184 (YIILSGVSSSFLLFGIVFIYC), 216 to 236 (IVIGLSMMMIGMGFKLSCVPF), 254 to 274 (YLATGSKIAVTAVLMRFLLIL), 282 to 302 (LHIFLSVSACCSMLFGSLMAI), 309 to 329 (RMLAYSSITNAGYLLIALIAL), 341 to 361 (ISVYLVSYLFANVGVWGIVNI), 392 to 412 (VIFVIAILSLAGIPMTFGFIG), 425 to 447 (LWFLTVMMIISSIISMFYYLKII), and 476 to 496 (FMVIIVAIIILFFGVYPQFIV).

The protein belongs to the complex I subunit 2 family. As to quaternary structure, NDH-1 is composed of 13 different subunits. Subunits NuoA, H, J, K, L, M, N constitute the membrane sector of the complex.

Its subcellular location is the cell inner membrane. The enzyme catalyses a quinone + NADH + 5 H(+)(in) = a quinol + NAD(+) + 4 H(+)(out). NDH-1 shuttles electrons from NADH, via FMN and iron-sulfur (Fe-S) centers, to quinones in the respiratory chain. The immediate electron acceptor for the enzyme in this species is believed to be ubiquinone. Couples the redox reaction to proton translocation (for every two electrons transferred, four hydrogen ions are translocated across the cytoplasmic membrane), and thus conserves the redox energy in a proton gradient. The chain is NADH-quinone oxidoreductase subunit N from Blochmanniella floridana.